Here is a 217-residue protein sequence, read N- to C-terminus: Probable transaldolase (217 aa).

Lys-83 (schiff-base intermediate with substrate) is an active-site residue.

The protein belongs to the transaldolase family. Type 3B subfamily.

Its subcellular location is the cytoplasm. It carries out the reaction D-sedoheptulose 7-phosphate + D-glyceraldehyde 3-phosphate = D-erythrose 4-phosphate + beta-D-fructose 6-phosphate. The protein operates within carbohydrate degradation; pentose phosphate pathway; D-glyceraldehyde 3-phosphate and beta-D-fructose 6-phosphate from D-ribose 5-phosphate and D-xylulose 5-phosphate (non-oxidative stage): step 2/3. Its function is as follows. Transaldolase is important for the balance of metabolites in the pentose-phosphate pathway. This chain is Probable transaldolase, found in Jannaschia sp. (strain CCS1).